The sequence spans 162 residues: Nucleotide-binding protein SCO4614 (162 aa).

This sequence belongs to the YajQ family.

The protein localises to the cytoplasm. Its subcellular location is the nucleoid. In terms of biological role, nucleotide-binding protein. This Streptomyces coelicolor (strain ATCC BAA-471 / A3(2) / M145) protein is Nucleotide-binding protein SCO4614.